A 509-amino-acid chain; its full sequence is Protein disulfide-isomerase (509 aa).

Residues 1-19 (MLSRSLLCLALAWVARVGA) form the signal peptide. The region spanning 20–136 (DAPEEEDNVL…IVNWLKKRTG (117 aa)) is the Thioredoxin 1 domain. Residues C55 and C58 each act as nucleophile in the active site. An intrachain disulfide couples C55 to C58. K202 carries the post-translational modification N6-acetyllysine. Residues K224 and K273 each carry the N6-succinyllysine modification. 2 positions are modified to phosphoserine: S333 and S359. In terms of domain architecture, Thioredoxin 2 spans 335 to 477 (ELTAEKITEF…FKKFLESGGQ (143 aa)). Residues C399 and C402 each act as nucleophile in the active site. A disulfide bridge connects residues C399 and C402. Position 429 is a phosphoserine (S429). The interval 473–509 (ESGGQDGAGDDDDVDLEEALEPDMEEDDDQKAVKDEL) is disordered. A compositionally biased stretch (acidic residues) spans 480–501 (AGDDDDVDLEEALEPDMEEDDD). The Prevents secretion from ER motif lies at 506–509 (KDEL).

It belongs to the protein disulfide isomerase family. In terms of assembly, heterodimer; heterodimerizes with the protein microsomal triglyceride transfer MTTP. Homodimer. Homodimer. Monomers and homotetramers may also occur. Interacts with P4HA2, forming a heterotetramer consisting of 2 alpha subunits (P4HA2) and 2 beta (P4HB), where P4HB plays the role of a structural subunit; this tetramer catalyzes the formation of 4-hydroxyproline in collagen. Also constitutes the structural subunit of the microsomal triacylglycerol transfer protein MTTP in mammalian cells. Stabilizes both enzymes and retain them in the ER without contributing to the catalytic activity. Binds UBQLN1. Interacts with ERO1B. Interacts with ILDR2. Interacts with ERN1/IRE1A (via N-terminus); the interaction is enhanced by phosphorylation of P4HB by FAM20C in response to endoplasmic reticulum stress and results in attenuation of ERN1 activity. In terms of processing, phosphorylation of Ser-359 by FAM20C is induced by endoplasmic reticulum stress and results in a functional switch from oxidoreductase to molecular chaperone. It also promotes interaction with ERN1.

Its subcellular location is the endoplasmic reticulum. The protein resides in the endoplasmic reticulum lumen. It is found in the melanosome. The protein localises to the cell membrane. It catalyses the reaction Catalyzes the rearrangement of -S-S- bonds in proteins.. Functionally, this multifunctional protein catalyzes the formation, breakage and rearrangement of disulfide bonds. At the cell surface, seems to act as a reductase that cleaves disulfide bonds of proteins attached to the cell. May therefore cause structural modifications of exofacial proteins. Inside the cell, seems to form/rearrange disulfide bonds of nascent proteins. At high concentrations and following phosphorylation by FAM20C, functions as a chaperone that inhibits aggregation of misfolded proteins. At low concentrations, facilitates aggregation (anti-chaperone activity). May be involved with other chaperones in the structural modification of the TG precursor in hormone biogenesis. Also acts as a structural subunit of various enzymes such as prolyl 4-hydroxylase and microsomal triacylglycerol transfer protein MTTP. Receptor for LGALS9; the interaction retains P4HB at the cell surface of Th2 T helper cells, increasing disulfide reductase activity at the plasma membrane, altering the plasma membrane redox state and enhancing cell migration. The polypeptide is Protein disulfide-isomerase (P4HB) (Cricetulus griseus (Chinese hamster)).